A 247-amino-acid polypeptide reads, in one-letter code: MSEATTTLDGWYCLHDLRSIDWAAWKTLSSDERGQAVSEFLNVVEKWNEVATAKKGSHAMYTVVGQKADIMLMILRPTMEELNEIETELNKTTLAEYLVPAYSYVSVVELSNYLPADEDPYQNPQILARLYPELPKANHICFYPMDKRRQGDDNWYMLPMEERKKMMYSHSKIGRQYAGKVRQVISGSVGFDDFEWGVTLFADDVLQFKKLIYEMRFDEVSARYGEFGTFFVGNILPDEKVEKFLHI.

Fe-coproporphyrin III-binding positions include Arg-129, 143–147 (YPMDK), His-170, Gln-183, and Ser-221. The active site involves Tyr-143.

The protein belongs to the ChdC family. Type 1 subfamily. It depends on Fe-coproporphyrin III as a cofactor.

The catalysed reaction is Fe-coproporphyrin III + 2 H2O2 + 2 H(+) = heme b + 2 CO2 + 4 H2O. The enzyme catalyses Fe-coproporphyrin III + H2O2 + H(+) = harderoheme III + CO2 + 2 H2O. It carries out the reaction harderoheme III + H2O2 + H(+) = heme b + CO2 + 2 H2O. It functions in the pathway porphyrin-containing compound metabolism; protoheme biosynthesis. Its function is as follows. Involved in coproporphyrin-dependent heme b biosynthesis. Catalyzes the decarboxylation of Fe-coproporphyrin III (coproheme) to heme b (protoheme IX), the last step of the pathway. The reaction occurs in a stepwise manner with a three-propionate intermediate. This chain is Coproheme decarboxylase, found in Bacillus mycoides (strain KBAB4) (Bacillus weihenstephanensis).